Reading from the N-terminus, the 543-residue chain is Chaperonin GroEL 2 (543 aa).

ATP-binding positions include 29-32 (TLGP), 86-90 (DGTTT), Gly-413, 478-480 (NAA), and Asp-494.

This sequence belongs to the chaperonin (HSP60) family. Forms a cylinder of 14 subunits composed of two heptameric rings stacked back-to-back. Interacts with the co-chaperonin GroES.

It localises to the cytoplasm. The catalysed reaction is ATP + H2O + a folded polypeptide = ADP + phosphate + an unfolded polypeptide.. Its function is as follows. Together with its co-chaperonin GroES, plays an essential role in assisting protein folding. The GroEL-GroES system forms a nano-cage that allows encapsulation of the non-native substrate proteins and provides a physical environment optimized to promote and accelerate protein folding. The polypeptide is Chaperonin GroEL 2 (Thermosynechococcus vestitus (strain NIES-2133 / IAM M-273 / BP-1)).